Here is a 156-residue protein sequence, read N- to C-terminus: Small ribosomal subunit protein uS7 (156 aa).

Belongs to the universal ribosomal protein uS7 family. In terms of assembly, part of the 30S ribosomal subunit. Contacts proteins S9 and S11.

One of the primary rRNA binding proteins, it binds directly to 16S rRNA where it nucleates assembly of the head domain of the 30S subunit. Is located at the subunit interface close to the decoding center, probably blocks exit of the E-site tRNA. The sequence is that of Small ribosomal subunit protein uS7 from Clostridium botulinum (strain Kyoto / Type A2).